The chain runs to 148 residues: Large ribosomal subunit protein bL9 (148 aa).

This sequence belongs to the bacterial ribosomal protein bL9 family.

Its function is as follows. Binds to the 23S rRNA. The protein is Large ribosomal subunit protein bL9 of Dechloromonas aromatica (strain RCB).